A 336-amino-acid polypeptide reads, in one-letter code: MPTSVSLREDDPLLKDLSEKKQSFRRNVVSLATELKEARTRLAEQERSCSKEAMSRQEAETRVKRMEDEMHELAKELNEKVEQIRASDVATEKFVKELADIKSQLAATHATAEASALSAESAHSHCRVLSKQLHERTGSLKEHEDQVTRLGEQLENLRKELRVRESSQKQLRDELLKVEGDIMRAVSVVKTKENSEVRNMLNEDTPKNSERINKLLTAKDDEIARLRDELKIISAHWRFKTKELEDQVENQRRIDQELKKKVLKLEFCLRETRIQTRKLQKMGERNDVAIQELKEQLAAKKQHEADHSSNQNLWDKSGFKIVVSMSMLILVAFSRR.

Coiled coils occupy residues 14 to 87 and 128 to 261; these read LKDL…IRAS and VLSK…LKKK. Residues 240 to 261 carry the Bipartite nuclear localization signal motif; that stretch reads KTKELEDQVENQRRIDQELKKK. The helical transmembrane segment at 313-330 threads the bilayer; it reads LWDKSGFKIVVSMSMLIL.

In terms of assembly, forms homomers and heteromers with NEAP1 and NEAP2. Interacts with SUN1 and SUN2.

It is found in the nucleus inner membrane. The protein resides in the nucleus. The protein localises to the nucleoplasm. This chain is Nuclear envelope-associated protein 3, found in Arabidopsis thaliana (Mouse-ear cress).